Reading from the N-terminus, the 664-residue chain is Probable urea active transporter 1 (664 aa).

16 helical membrane passes run 9–29 (SVGY…MIFV), 56–76 (GLVA…LTSA), 86–106 (GAFW…VLAI), 132–152 (GVFL…LLCG), 165–185 (TVAV…FGGI), 189–209 (FLTD…FSLA), 252–272 (GAIF…VDNG), 290–310 (ILGG…MGLV), 327–347 (MSDL…ALMG), 353–373 (ATLL…LIAV), 395–415 (LLYT…GFAT), 428–448 (YLLM…VMLF), 454–474 (IAVT…WLVV), 496–516 (AGNV…SIIF), 555–575 (VAAL…MYGT), and 587–607 (WVVV…IFPL).

The protein belongs to the sodium:solute symporter (SSF) (TC 2.A.21) family.

It localises to the membrane. Functionally, involved in active transport of urea. The sequence is that of Probable urea active transporter 1 (dur3-1) from Schizosaccharomyces pombe (strain 972 / ATCC 24843) (Fission yeast).